The primary structure comprises 311 residues: tRNA-cytidine(32) 2-sulfurtransferase (311 aa).

Positions 45–50 (SGGKDS) match the PP-loop motif motif. Positions 120, 123, and 211 each coordinate [4Fe-4S] cluster.

This sequence belongs to the TtcA family. As to quaternary structure, homodimer. Requires Mg(2+) as cofactor. [4Fe-4S] cluster serves as cofactor.

It localises to the cytoplasm. The enzyme catalyses cytidine(32) in tRNA + S-sulfanyl-L-cysteinyl-[cysteine desulfurase] + AH2 + ATP = 2-thiocytidine(32) in tRNA + L-cysteinyl-[cysteine desulfurase] + A + AMP + diphosphate + H(+). It participates in tRNA modification. In terms of biological role, catalyzes the ATP-dependent 2-thiolation of cytidine in position 32 of tRNA, to form 2-thiocytidine (s(2)C32). The sulfur atoms are provided by the cysteine/cysteine desulfurase (IscS) system. The protein is tRNA-cytidine(32) 2-sulfurtransferase of Shewanella halifaxensis (strain HAW-EB4).